A 392-amino-acid chain; its full sequence is Na(+)/H(+) antiporter NhaA (392 aa).

11 helical membrane-spanning segments follow: residues 17-37, 59-79, 95-115, 125-145, 154-174, 179-199, 213-233, 254-274, 290-310, 328-348, and 363-383; these read ILLIVAAIIALIMANTPLSAL, LILWVNDALMAIFFLVVGLEV, IFPAIAAVGGMLAPALIYLFF, GWAIPAATDIAFALGVMALLG, VFLLALAIIDDLGVIVIIALF, VALVPLLLAALITIMLFILNW, FILWVCILKSGIHATIAGVIV, VLHPWVAYLILPLFAFSNAGV, VGIALGLFLGKPIGIFLFSWV, IFAVSVLCGIGFTMSIFIAGL, and LGILVGSTMAAVVGYLLLNSV.

Belongs to the NhaA Na(+)/H(+) (TC 2.A.33) antiporter family.

Its subcellular location is the cell inner membrane. It catalyses the reaction Na(+)(in) + 2 H(+)(out) = Na(+)(out) + 2 H(+)(in). Functionally, na(+)/H(+) antiporter that extrudes sodium in exchange for external protons. This chain is Na(+)/H(+) antiporter NhaA, found in Proteus mirabilis (strain HI4320).